Here is a 424-residue protein sequence, read N- to C-terminus: Putative chloroquine resistance transporter (424 aa).

Residues 1–56 are Cytoplasmic-facing; sequence MTVIKKGKNKKKNLKNDDRYKELDSLITNGSEIGDNSGRSCIKRFFKIIGNEMKNN. Residues 57-77 form a helical membrane-spanning segment; the sequence is VYVYFLSILYLCVCVMNKVFA. Topologically, residues 78 to 88 are vacuolar; it reads KRTLNKMGNYS. N-linked (GlcNAc...) asparagine glycosylation occurs at N86. A helical membrane pass occupies residues 89–109; that stretch reads FVTSETHNIICIVVFQLLYFI. Topologically, residues 110-125 are cytoplasmic; it reads YRKTSTSGYKNESQKN. The chain crosses the membrane as a helical span at residues 126–146; that stretch reads FGWQFFLISLLDASTVIISMI. The Vacuolar segment spans residues 147-156; that stretch reads GLTRTTGNIQ. Residues 157 to 177 form a helical membrane-spanning segment; sequence SFIMQLIIPVNMYFCFMFLGY. Topologically, residues 178-180 are cytoplasmic; that stretch reads RYH. A helical transmembrane segment spans residues 181–201; it reads LFNYLGAFIILITIAVVETFL. At 202 to 209 the chain is on the vacuolar side; the sequence is SFETQSEN. Residues 210–230 traverse the membrane as a helical segment; sequence SIIFNLIMISALIPLSFSNMT. Topologically, residues 231–248 are cytoplasmic; the sequence is REVVFKKHKINILRLNAM. Residues 249–269 form a helical membrane-spanning segment; that stretch reads VVLFQFFTSLLVLPVYNIPFL. The Vacuolar segment spans residues 270-317; it reads KEIYMPFSEMSTNINNGLRCLFYGQNTVVENCGVGMVKMCDNCEGAWK. Cystine bridges form between C289–C312 and C301–C309. Residues 318–338 traverse the membrane as a helical segment; it reads TFITFSFFNICDNLLACYIID. Residues 339–346 lie on the Cytoplasmic side of the membrane; the sequence is KFSTMTYT. A helical transmembrane segment spans residues 347 to 367; that stretch reads IVSCIQGPAITIAYYFKFLAG. Residues 368–377 are Vacuolar-facing; the sequence is DAVRKPRILD. A helical membrane pass occupies residues 378-398; that stretch reads FLTLFGYLFGTIIYRIGNIIL. Residues 399 to 424 lie on the Cytoplasmic side of the membrane; sequence EKKKMVKSQNSNDSEAELTCIETSTA.

It belongs to the CRT-like transporter family.

The protein resides in the vacuole membrane. Functionally, nutrient transporter. Involved in maintaining the osmotic homeostasis of the digestive vacuole. The sequence is that of Putative chloroquine resistance transporter from Plasmodium yoelii yoelii.